A 265-amino-acid polypeptide reads, in one-letter code: Ribosomal RNA small subunit methyltransferase G (265 aa).

S-adenosyl-L-methionine is bound by residues Gly-75, Leu-80, and Arg-145. Positions 212-265 (RAVRSSQRTRAESRGGRGDGERHDGRQVRRTSRDSLRSREVGRDQPTRGQSRST) are disordered. Residues 220-257 (TRAESRGGRGDGERHDGRQVRRTSRDSLRSREVGRDQP) show a composition bias toward basic and acidic residues.

Belongs to the methyltransferase superfamily. RNA methyltransferase RsmG family.

The protein localises to the cytoplasm. Specifically methylates the N7 position of guanine in position 518 of 16S rRNA. The chain is Ribosomal RNA small subunit methyltransferase G from Frankia casuarinae (strain DSM 45818 / CECT 9043 / HFP020203 / CcI3).